We begin with the raw amino-acid sequence, 160 residues long: 3-hydroxyacyl-[acyl-carrier-protein] dehydratase FabZ (160 aa).

His-60 is an active-site residue.

Belongs to the thioester dehydratase family. FabZ subfamily.

The protein localises to the cytoplasm. It carries out the reaction a (3R)-hydroxyacyl-[ACP] = a (2E)-enoyl-[ACP] + H2O. In terms of biological role, involved in unsaturated fatty acids biosynthesis. Catalyzes the dehydration of short chain beta-hydroxyacyl-ACPs and long chain saturated and unsaturated beta-hydroxyacyl-ACPs. This is 3-hydroxyacyl-[acyl-carrier-protein] dehydratase FabZ from Rhodospirillum rubrum (strain ATCC 11170 / ATH 1.1.1 / DSM 467 / LMG 4362 / NCIMB 8255 / S1).